A 309-amino-acid chain; its full sequence is Flavonol sulfotransferase-like (309 aa).

3'-phosphoadenylyl sulfate is bound at residue 59 to 64 (KTGTTW). Histidine 119 serves as the catalytic Proton acceptor. 3'-phosphoadenylyl sulfate is bound by residues arginine 141, serine 149, tyrosine 207, and 274–276 (RKG).

This sequence belongs to the sulfotransferase 1 family.

The protein resides in the cytoplasm. This chain is Flavonol sulfotransferase-like, found in Flaveria bidentis (Coastal plain yellowtops).